We begin with the raw amino-acid sequence, 480 residues long: Proline--tRNA ligase (480 aa).

Belongs to the class-II aminoacyl-tRNA synthetase family. ProS type 3 subfamily. In terms of assembly, homodimer.

The protein resides in the cytoplasm. The enzyme catalyses tRNA(Pro) + L-proline + ATP = L-prolyl-tRNA(Pro) + AMP + diphosphate. Catalyzes the attachment of proline to tRNA(Pro) in a two-step reaction: proline is first activated by ATP to form Pro-AMP and then transferred to the acceptor end of tRNA(Pro). The sequence is that of Proline--tRNA ligase from Chloroflexus aurantiacus (strain ATCC 29364 / DSM 637 / Y-400-fl).